A 100-amino-acid polypeptide reads, in one-letter code: Urease subunit gamma (100 aa).

It belongs to the urease gamma subunit family. Heterotrimer of UreA (gamma), UreB (beta) and UreC (alpha) subunits. Three heterotrimers associate to form the active enzyme.

Its subcellular location is the cytoplasm. It carries out the reaction urea + 2 H2O + H(+) = hydrogencarbonate + 2 NH4(+). It participates in nitrogen metabolism; urea degradation; CO(2) and NH(3) from urea (urease route): step 1/1. The polypeptide is Urease subunit gamma (Citrobacter koseri (strain ATCC BAA-895 / CDC 4225-83 / SGSC4696)).